A 190-amino-acid polypeptide reads, in one-letter code: dCTP deaminase, dUMP-forming (190 aa).

DCTP-binding positions include 101-106, Asp119, 127-129, Gln148, Tyr162, and Gln174; these read KSSLGR and TLE. The active-site Proton donor/acceptor is the Glu129. The tract at residues 163-190 is disordered; sequence GSTRVGSKYQGQRGPTPSRSYQNFITST. Positions 171–190 are enriched in polar residues; that stretch reads YQGQRGPTPSRSYQNFITST.

The protein belongs to the dCTP deaminase family. As to quaternary structure, homotrimer.

The enzyme catalyses dCTP + 2 H2O = dUMP + NH4(+) + diphosphate. It functions in the pathway pyrimidine metabolism; dUMP biosynthesis; dUMP from dCTP: step 1/1. Functionally, bifunctional enzyme that catalyzes both the deamination of dCTP to dUTP and the hydrolysis of dUTP to dUMP without releasing the toxic dUTP intermediate. The protein is dCTP deaminase, dUMP-forming of Mycobacterium avium (strain 104).